The sequence spans 596 residues: tRNA(Met) cytidine acetyltransferase TmcA (596 aa).

Residues glutamine 138, 160-169, and arginine 285 each bind ATP; that span reads GRGKSTLAGK. One can recognise an N-acetyltransferase domain in the interval 328–481; the sequence is SDLRRLFDAQ…SGYHSAMMLY (154 aa). Residues 406 to 408 and 413 to 419 contribute to the acetyl-CoA site; these read IAV and QKQGIGK.

Belongs to the RNA cytidine acetyltransferase family. TmcA subfamily.

It is found in the cytoplasm. The catalysed reaction is cytidine(34) in elongator tRNA(Met) + acetyl-CoA + ATP + H2O = N(4)-acetylcytidine(34) in elongator tRNA(Met) + ADP + phosphate + CoA + H(+). Catalyzes the formation of N(4)-acetylcytidine (ac(4)C) at the wobble position of tRNA(Met), by using acetyl-CoA as an acetyl donor and ATP (or GTP). In Actinobacillus pleuropneumoniae serotype 5b (strain L20), this protein is tRNA(Met) cytidine acetyltransferase TmcA.